Consider the following 103-residue polypeptide: Large ribosomal subunit protein bL21 (103 aa).

The protein belongs to the bacterial ribosomal protein bL21 family. In terms of assembly, part of the 50S ribosomal subunit. Contacts protein L20.

In terms of biological role, this protein binds to 23S rRNA in the presence of protein L20. The sequence is that of Large ribosomal subunit protein bL21 from Chloroflexus aurantiacus (strain ATCC 29364 / DSM 637 / Y-400-fl).